Reading from the N-terminus, the 38-residue chain is ACIDRFPTGTCKHVKKGGSCKNSQKYRINCAKTCGLCH.

The region spanning 2-37 is the ShKT domain; sequence CIDRFPTGTCKHVKKGGSCKNSQKYRINCAKTCGLC. Cystine bridges form between cysteine 2-cysteine 37, cysteine 11-cysteine 30, and cysteine 20-cysteine 34. A crucial for binding to potassium channels region spans residues 25–26; the sequence is KY.

It belongs to the sea anemone type 1 potassium channel toxin family. Type 1b subfamily.

It is found in the secreted. The protein localises to the nematocyst. In terms of biological role, inhibits voltage-gated potassium channels (IC(50)=405.0 nM for rKCNA1/Kv1.1, IC(50)=0.03 nM for rKCNA2/Kv1.2, IC(50)=1.31 nM for rKCNA6/Kv1.6, IC(50)=74.11 nM for hKCNA3/Kv1.3, and IC(50)=247.69 nM for insect Shaker IR). Binds the Shaker IR channels in a voltage-independent manner. The chain is Kappa-actitoxin-Bcs3a from Bunodosoma caissarum (Sea anemone).